The following is a 135-amino-acid chain: uncharacterized protein (135 aa).

Helical transmembrane passes span 11–31 (ILFF…GYLI) and 57–77 (LGTA…TDAI).

Its subcellular location is the cell membrane. This is an uncharacterized protein from Methanocaldococcus jannaschii (strain ATCC 43067 / DSM 2661 / JAL-1 / JCM 10045 / NBRC 100440) (Methanococcus jannaschii).